A 492-amino-acid polypeptide reads, in one-letter code: Anthranilate synthase component 1 (492 aa).

Residues serine 48 and 273–275 (PYM) each bind L-tryptophan. 308-309 (GT) contributes to the chorismate binding site. Glutamate 335 serves as a coordination point for Mg(2+). Chorismate-binding positions include tyrosine 423, arginine 443, 457 to 459 (GGG), and glycine 459. Residue glutamate 472 participates in Mg(2+) binding.

It belongs to the anthranilate synthase component I family. As to quaternary structure, heterotetramer consisting of two non-identical subunits: a beta subunit (TrpG) and a large alpha subunit (TrpE). Requires Mg(2+) as cofactor.

It catalyses the reaction chorismate + L-glutamine = anthranilate + pyruvate + L-glutamate + H(+). It functions in the pathway amino-acid biosynthesis; L-tryptophan biosynthesis; L-tryptophan from chorismate: step 1/5. Its activity is regulated as follows. Feedback inhibited by tryptophan. In terms of biological role, part of a heterotetrameric complex that catalyzes the two-step biosynthesis of anthranilate, an intermediate in the biosynthesis of L-tryptophan. In the first step, the glutamine-binding beta subunit (TrpG) of anthranilate synthase (AS) provides the glutamine amidotransferase activity which generates ammonia as a substrate that, along with chorismate, is used in the second step, catalyzed by the large alpha subunit of AS (TrpE) to produce anthranilate. In the absence of TrpG, TrpE can synthesize anthranilate directly from chorismate and high concentrations of ammonia. The protein is Anthranilate synthase component 1 of Pseudomonas aeruginosa (strain ATCC 15692 / DSM 22644 / CIP 104116 / JCM 14847 / LMG 12228 / 1C / PRS 101 / PAO1).